The sequence spans 112 residues: MAGKMSIVLFVLLVVFLTQNQVSRANIMRDEQQQQQRNNQLYGVSEGRLHPQDCQPKCTYRCSKTSYKKPCMFFCQKCCAKCLCVPAGTYGNKQSCPCYNNWKTKRGGPKCP.

Residues 1–25 (MAGKMSIVLFVLLVVFLTQNQVSRA) form the signal peptide.

The protein belongs to the GASA family. Post-translationally, six disulfide bonds may be present. In terms of tissue distribution, all shoot organs.

The protein localises to the secreted. This is Protein GAST1 (GAST1) from Solanum lycopersicum (Tomato).